Reading from the N-terminus, the 291-residue chain is Light-independent protochlorophyllide reductase iron-sulfur ATP-binding protein (291 aa).

ATP contacts are provided by residues 10–15 and lysine 39; that span reads GIGKST. Mg(2+) is bound at residue serine 14. 2 residues coordinate [4Fe-4S] cluster: cysteine 95 and cysteine 129. Residue 180-181 participates in ATP binding; that stretch reads NR.

The protein belongs to the NifH/BchL/ChlL family. As to quaternary structure, homodimer. Protochlorophyllide reductase is composed of three subunits; ChlL, ChlN and ChlB. Requires [4Fe-4S] cluster as cofactor.

The protein localises to the plastid. It localises to the chloroplast. The enzyme catalyses chlorophyllide a + oxidized 2[4Fe-4S]-[ferredoxin] + 2 ADP + 2 phosphate = protochlorophyllide a + reduced 2[4Fe-4S]-[ferredoxin] + 2 ATP + 2 H2O. It functions in the pathway porphyrin-containing compound metabolism; chlorophyll biosynthesis (light-independent). Its function is as follows. Component of the dark-operative protochlorophyllide reductase (DPOR) that uses Mg-ATP and reduced ferredoxin to reduce ring D of protochlorophyllide (Pchlide) to form chlorophyllide a (Chlide). This reaction is light-independent. The L component serves as a unique electron donor to the NB-component of the complex, and binds Mg-ATP. In Pinus contorta (Shore pine), this protein is Light-independent protochlorophyllide reductase iron-sulfur ATP-binding protein.